We begin with the raw amino-acid sequence, 236 residues long: Ubiquinone biosynthesis O-methyltransferase (236 aa).

4 residues coordinate S-adenosyl-L-methionine: R39, G59, D80, and M124.

The protein belongs to the methyltransferase superfamily. UbiG/COQ3 family.

It carries out the reaction a 3-demethylubiquinol + S-adenosyl-L-methionine = a ubiquinol + S-adenosyl-L-homocysteine + H(+). It catalyses the reaction a 3-(all-trans-polyprenyl)benzene-1,2-diol + S-adenosyl-L-methionine = a 2-methoxy-6-(all-trans-polyprenyl)phenol + S-adenosyl-L-homocysteine + H(+). The protein operates within cofactor biosynthesis; ubiquinone biosynthesis. In terms of biological role, O-methyltransferase that catalyzes the 2 O-methylation steps in the ubiquinone biosynthetic pathway. The sequence is that of Ubiquinone biosynthesis O-methyltransferase from Pseudoalteromonas translucida (strain TAC 125).